A 94-amino-acid polypeptide reads, in one-letter code: Large ribosomal subunit protein bL28 (94 aa).

This sequence belongs to the bacterial ribosomal protein bL28 family.

The protein is Large ribosomal subunit protein bL28 of Maricaulis maris (strain MCS10) (Caulobacter maris).